A 191-amino-acid chain; its full sequence is Protein RER1A (191 aa).

Met-1 is modified (N-acetylmethionine). 4 consecutive transmembrane segments (helical) span residues 39-57 (YRWI…RVYY), 60-80 (GFYI…IGFL), 115-135 (FKFW…TFFS), and 136-156 (VFDV…LFVL).

This sequence belongs to the RER1 family.

Its subcellular location is the membrane. Its function is as follows. Involved in the retrieval of endoplasmic reticulum membrane proteins from the early Golgi compartment. The protein is Protein RER1A (RER1A) of Arabidopsis thaliana (Mouse-ear cress).